We begin with the raw amino-acid sequence, 557 residues long: Dihydroxy-acid dehydratase (557 aa).

Cysteine 49 serves as a coordination point for [2Fe-2S] cluster. Residue aspartate 81 coordinates Mg(2+). [2Fe-2S] cluster is bound at residue cysteine 122. Aspartate 123 and lysine 124 together coordinate Mg(2+). The residue at position 124 (lysine 124) is an N6-carboxylysine. Residue cysteine 194 coordinates [2Fe-2S] cluster. Residue glutamate 446 participates in Mg(2+) binding. Catalysis depends on serine 472, which acts as the Proton acceptor.

The protein belongs to the IlvD/Edd family. In terms of assembly, homodimer. It depends on [2Fe-2S] cluster as a cofactor. The cofactor is Mg(2+).

It catalyses the reaction (2R)-2,3-dihydroxy-3-methylbutanoate = 3-methyl-2-oxobutanoate + H2O. The catalysed reaction is (2R,3R)-2,3-dihydroxy-3-methylpentanoate = (S)-3-methyl-2-oxopentanoate + H2O. It functions in the pathway amino-acid biosynthesis; L-isoleucine biosynthesis; L-isoleucine from 2-oxobutanoate: step 3/4. It participates in amino-acid biosynthesis; L-valine biosynthesis; L-valine from pyruvate: step 3/4. Functionally, functions in the biosynthesis of branched-chain amino acids. Catalyzes the dehydration of (2R,3R)-2,3-dihydroxy-3-methylpentanoate (2,3-dihydroxy-3-methylvalerate) into 2-oxo-3-methylpentanoate (2-oxo-3-methylvalerate) and of (2R)-2,3-dihydroxy-3-methylbutanoate (2,3-dihydroxyisovalerate) into 2-oxo-3-methylbutanoate (2-oxoisovalerate), the penultimate precursor to L-isoleucine and L-valine, respectively. This is Dihydroxy-acid dehydratase from Prochlorococcus marinus (strain MIT 9301).